A 474-amino-acid chain; its full sequence is Glutathione synthetase (474 aa).

An N-acetylalanine modification is found at Ala2. Arg125 lines the substrate pocket. Glu144 lines the ATP pocket. Mg(2+)-binding residues include Glu144 and Asn146. Substrate is bound by residues 148–151, 214–216, Gln220, and 267–270; these read ISAS, ERN, and RDGY. Residues Lys305, 364-373, Tyr375, and 398-401 each bind ATP; these read KPQREGGGNN and MEKI. Residue Glu368 participates in Mg(2+) binding. The residue at position 415 (Ser415) is a Phosphoserine. Glu425 provides a ligand contact to ATP. Residue Arg450 participates in substrate binding. The ATP site is built by Lys452 and Asp458. 461–462 is a binding site for substrate; the sequence is VA.

This sequence belongs to the eukaryotic GSH synthase family. Homodimer. Requires Mg(2+) as cofactor.

The enzyme catalyses gamma-L-glutamyl-L-cysteine + glycine + ATP = glutathione + ADP + phosphate + H(+). The catalysed reaction is gamma-L-glutamyl-(2S)-2-aminobutanoate + glycine + ATP = ophthalmate + ADP + phosphate + H(+). It functions in the pathway sulfur metabolism; glutathione biosynthesis; glutathione from L-cysteine and L-glutamate: step 2/2. Catalyzes the production of glutathione from gamma-glutamylcysteine and glycine in an ATP-dependent manner. Glutathione (gamma-glutamylcysteinylglycine, GSH) is the most abundant intracellular thiol in living aerobic cells and is required for numerous processes including the protection of cells against oxidative damage, amino acid transport, the detoxification of foreign compounds, the maintenance of protein sulfhydryl groups in a reduced state and acts as a cofactor for a number of enzymes. Participates in ophthalmate biosynthesis in hepatocytes. The chain is Glutathione synthetase from Rattus norvegicus (Rat).